We begin with the raw amino-acid sequence, 507 residues long: Glutamate--tRNA ligase (507 aa).

The short motif at 14–24 (PSPTGPLHIGG) is the 'HIGH' region element. Positions 262–266 (KLSKR) match the 'KMSKS' region motif. Residue lysine 265 coordinates ATP.

It belongs to the class-I aminoacyl-tRNA synthetase family. Glutamate--tRNA ligase type 1 subfamily. In terms of assembly, monomer.

It localises to the cytoplasm. It carries out the reaction tRNA(Glu) + L-glutamate + ATP = L-glutamyl-tRNA(Glu) + AMP + diphosphate. Catalyzes the attachment of glutamate to tRNA(Glu) in a two-step reaction: glutamate is first activated by ATP to form Glu-AMP and then transferred to the acceptor end of tRNA(Glu). This is Glutamate--tRNA ligase from Porphyromonas gingivalis (strain ATCC 33277 / DSM 20709 / CIP 103683 / JCM 12257 / NCTC 11834 / 2561).